We begin with the raw amino-acid sequence, 337 residues long: Regulator of RpoS (337 aa).

The 115-residue stretch at Q9–C123 folds into the Response regulatory domain. D58 is modified (4-aspartylphosphate).

The protein belongs to the RssB family. Binds to RpoS. In terms of processing, phosphorylated. Phosphorylation stimulates the interaction with RpoS and, therefore, the proteolysis of RpoS.

Regulates the turnover of the sigma S factor (RpoS) by promoting its proteolysis in exponentially growing cells. Acts by binding and delivering RpoS to the ClpXP protease. RssB is not co-degraded with RpoS, but is released from the complex and can initiate a new cycle of RpoS recognition and degradation. This Shigella flexneri protein is Regulator of RpoS.